The sequence spans 94 residues: Co-chaperonin GroES (94 aa).

This sequence belongs to the GroES chaperonin family. In terms of assembly, heptamer of 7 subunits arranged in a ring. Interacts with the chaperonin GroEL.

It is found in the cytoplasm. Its function is as follows. Together with the chaperonin GroEL, plays an essential role in assisting protein folding. The GroEL-GroES system forms a nano-cage that allows encapsulation of the non-native substrate proteins and provides a physical environment optimized to promote and accelerate protein folding. GroES binds to the apical surface of the GroEL ring, thereby capping the opening of the GroEL channel. In Desulfitobacterium hafniense (strain DSM 10664 / DCB-2), this protein is Co-chaperonin GroES.